The following is a 315-amino-acid chain: MNPNFLDFEQPIADLQAKIEELRLVGNDNSLNIGDEIARLQDKSSTLTEDIFGKLTSWQIARLARHPRRPYTLDYIQHIFTEFDELHGDRHFSDDAAIVGGIARLDDQPVMVIGHQKGREVREKVRRNFGMPRPEGYRKACRLMEMAERFKMPILTFIDTPGAYPGIDAEERNQSEAIAWNLRVMSRLKTPIIATVIGEGGSGGALAIGVCDQLNMLQYSTYAVISPEGCASILWKTAEKAPDAAEAMGITADRLKGLGIVDKVIAEPLGGAHRDPAAAAATIRGELASQLAMLKKLDNEALLARRYERLMSYGL.

The 255-residue stretch at 39 to 293 (RLQDKSSTLT…RGELASQLAM (255 aa)) folds into the CoA carboxyltransferase C-terminal domain.

It belongs to the AccA family. As to quaternary structure, acetyl-CoA carboxylase is a heterohexamer composed of biotin carboxyl carrier protein (AccB), biotin carboxylase (AccC) and two subunits each of ACCase subunit alpha (AccA) and ACCase subunit beta (AccD).

It localises to the cytoplasm. It carries out the reaction N(6)-carboxybiotinyl-L-lysyl-[protein] + acetyl-CoA = N(6)-biotinyl-L-lysyl-[protein] + malonyl-CoA. Its pathway is lipid metabolism; malonyl-CoA biosynthesis; malonyl-CoA from acetyl-CoA: step 1/1. Its function is as follows. Component of the acetyl coenzyme A carboxylase (ACC) complex. First, biotin carboxylase catalyzes the carboxylation of biotin on its carrier protein (BCCP) and then the CO(2) group is transferred by the carboxyltransferase to acetyl-CoA to form malonyl-CoA. In Pseudomonas fluorescens (strain SBW25), this protein is Acetyl-coenzyme A carboxylase carboxyl transferase subunit alpha.